The chain runs to 227 residues: Ubiquitin domain-containing protein 1 (227 aa).

The segment at 1–35 is disordered; the sequence is MGNCVGRQRRERPAAPGHPRKRAGRNEPLKKERLK. A compositionally biased stretch (basic and acidic residues) spans 24–35; sequence GRNEPLKKERLK. The region spanning 149–224 is the Ubiquitin-like domain; it reads FPLKVRLSTG…IQVIINQPPP (76 aa).

As to quaternary structure, interacts with UBTD1.

Functionally, may be involved in the regulation of cellular senescence through a positive feedback loop with TP53. Is a TP53 downstream target gene that increases the stability of TP53 protein by promoting the ubiquitination and degradation of MDM2. This is Ubiquitin domain-containing protein 1 (Ubtd1) from Rattus norvegicus (Rat).